The chain runs to 560 residues: DNA ligase B (560 aa).

Lys124 acts as the N6-AMP-lysine intermediate in catalysis.

It belongs to the NAD-dependent DNA ligase family. LigB subfamily.

It carries out the reaction NAD(+) + (deoxyribonucleotide)n-3'-hydroxyl + 5'-phospho-(deoxyribonucleotide)m = (deoxyribonucleotide)n+m + AMP + beta-nicotinamide D-nucleotide.. Its function is as follows. Catalyzes the formation of phosphodiester linkages between 5'-phosphoryl and 3'-hydroxyl groups in double-stranded DNA using NAD as a coenzyme and as the energy source for the reaction. This Escherichia coli (strain SMS-3-5 / SECEC) protein is DNA ligase B.